Here is a 300-residue protein sequence, read N- to C-terminus: MSDDILFESKNYFYLGNYQSTINEINKKSRQIIEKSLKAESDYFLYRCYIAQGNYDLVLQETKNNRGSGEDPTIAGLQLLASYLSKPDENREGTLITITQWISDGVVKFNYHLQVIIATIYFNEQLYDEALQILNNCDHIEGLSMLIQIFLKIDRLDLAQKAYDTMKKIIDPDATPALLSLAWINIYNGEEKLKSALSSFEEMAERYGPTPLLLNGQAVCAIGMKRFEKAESLLLESIEKNPKNSDTLANLINCYINMKKPNEIIQRFINQLKTLSPKHDWTSAVNEAEALFEVSKSRFN.

This sequence belongs to the COPE family. Oligomeric complex that consists of at least the alpha, beta, beta', gamma, delta, epsilon and zeta subunits.

The protein resides in the cytoplasm. It is found in the golgi apparatus membrane. The protein localises to the cytoplasmic vesicle. Its subcellular location is the COPI-coated vesicle membrane. Its function is as follows. The coatomer is a cytosolic protein complex that binds to dilysine motifs and reversibly associates with Golgi non-clathrin-coated vesicles, which further mediate biosynthetic protein transport from the ER, via the Golgi up to the trans Golgi network. The coatomer complex is required for budding from Golgi membranes, and is essential for the retrograde Golgi-to-ER transport of dilysine-tagged proteins. The chain is Coatomer subunit epsilon (cope) from Dictyostelium discoideum (Social amoeba).